The following is a 449-amino-acid chain: NADH-quinone oxidoreductase subunit H (449 aa).

Helical transmembrane passes span 23–43 (WWVIGLKAVLILVVLLLLTLF), 93–113 (AVYLIAPVIAVIPSFITFSVI), 137–157 (VAVLFVMAIASIGIYGIVLGG), 176–196 (MISYEVAMGLALVAVFLYAGS), 209–229 (LWYGLILVPSFVIYLIAMVGE), 258–280 (ALFFLAEYINMATVSAVATTLFL), 300–320 (YWPLLWFLGKVLFFVFIFIWL), 332–352 (FMAFGWKRLIPVALVWIVAVA), and 368–388 (LLIGIGALAVVFLVLFFIGGA). Residues 427 to 442 (RSSPIASSMPQPSAAT) are compositionally biased toward polar residues. The tract at residues 427–449 (RSSPIASSMPQPSAATRSAGEEI) is disordered.

It belongs to the complex I subunit 1 family. NDH-1 is composed of 14 different subunits. Subunits NuoA, H, J, K, L, M, N constitute the membrane sector of the complex.

The protein resides in the cell membrane. The enzyme catalyses a quinone + NADH + 5 H(+)(in) = a quinol + NAD(+) + 4 H(+)(out). Functionally, NDH-1 shuttles electrons from NADH, via FMN and iron-sulfur (Fe-S) centers, to quinones in the respiratory chain. The immediate electron acceptor for the enzyme in this species is believed to be ubiquinone. Couples the redox reaction to proton translocation (for every two electrons transferred, four hydrogen ions are translocated across the cytoplasmic membrane), and thus conserves the redox energy in a proton gradient. This subunit may bind ubiquinone. The polypeptide is NADH-quinone oxidoreductase subunit H (Nocardioides sp. (strain ATCC BAA-499 / JS614)).